Here is an 86-residue protein sequence, read N- to C-terminus: Candiduxin-1 (86 aa).

The signal sequence occupies residues 1–21 (MKTLLLTLVVLTIACLDLGYT). Disulfide bonds link cysteine 24/cysteine 45, cysteine 38/cysteine 62, cysteine 66/cysteine 78, and cysteine 79/cysteine 84.

The protein belongs to the three-finger toxin family. Short-chain subfamily. Orphan group IX sub-subfamily. As to expression, expressed by the venom gland.

Its subcellular location is the secreted. The sequence is that of Candiduxin-1 from Bungarus candidus (Malayan krait).